Reading from the N-terminus, the 194-residue chain is Holliday junction branch migration complex subunit RuvA (194 aa).

The tract at residues 1-64 is domain I; sequence MISRLTGKLV…EDAHLLFGFA (64 aa). A domain II region spans residues 65–143; it reads TAEERKTFRQ…AHAVTDGLFA (79 aa). Residues 144 to 147 form a flexible linker region; it reads AAPA. Residues 147–194 form a domain III region; that stretch reads AADETEDIVGTLLALGYSEREAKAAVKGVPKGTDVGEGVRLALKNLLK.

This sequence belongs to the RuvA family. Homotetramer. Forms an RuvA(8)-RuvB(12)-Holliday junction (HJ) complex. HJ DNA is sandwiched between 2 RuvA tetramers; dsDNA enters through RuvA and exits via RuvB. An RuvB hexamer assembles on each DNA strand where it exits the tetramer. Each RuvB hexamer is contacted by two RuvA subunits (via domain III) on 2 adjacent RuvB subunits; this complex drives branch migration. In the full resolvosome a probable DNA-RuvA(4)-RuvB(12)-RuvC(2) complex forms which resolves the HJ.

It is found in the cytoplasm. Functionally, the RuvA-RuvB-RuvC complex processes Holliday junction (HJ) DNA during genetic recombination and DNA repair, while the RuvA-RuvB complex plays an important role in the rescue of blocked DNA replication forks via replication fork reversal (RFR). RuvA specifically binds to HJ cruciform DNA, conferring on it an open structure. The RuvB hexamer acts as an ATP-dependent pump, pulling dsDNA into and through the RuvAB complex. HJ branch migration allows RuvC to scan DNA until it finds its consensus sequence, where it cleaves and resolves the cruciform DNA. The sequence is that of Holliday junction branch migration complex subunit RuvA from Neisseria meningitidis serogroup C / serotype 2a (strain ATCC 700532 / DSM 15464 / FAM18).